The sequence spans 764 residues: MGAKDDKKRVKKLKSKKLEAEEELNNVQEIDAHDIVMEQKSDKKRGKKVKSKKAEAEEHEEELKRLQEKDPDFFQYMKEHDAELLKFDATEIEDDADVEPDTDLEDTEKEGDDEATKMEIAKKVHVQKTITASMVDAWSKSIEDEAKLGGVRSILRAYRTACHYGDDTGDDQSTKFSVMSSEVFNKIMIYVLSEMDGILRKLLRFPEDTRGTKETILELTNTRPWKNYNHLVKSYLGNSLHVLNQMTDTEMITFTLRRLKHSSVFLAAFPSLLRKYIKVALHFWGTGSGALPVVSLLFLRDLCIRLGSDCVDDCFKGMYKAYVLNCQFVNADKLKHISFLGNCFIELLGTDISAAYQHAFVFIRQLAMILREALNTKTKEAFRKVYQWKFIHCLELWTGAVCAYSSQSELRPVAYPLAQIITGVARLVPTARYTPLRLRCVRMLNRLAAATGTFIPVSMLLVDMLEMKELNRPPTGGVGKGVDLRTLLKVSKPAVKTRAFQEACVYTVVEELVEHLSQWSCSVAFFELSFIPTIRLRSFCKSTKAERFRKEMKQLISQIEANSEFVNKKRALIKFLPNDLAAESFLEDEKKAGKTPLLQYAEIIRQRAQQRNESLVESDVIVGENSAVFGKNAPSSDDEDDEDRMEKGAAAFNSSWLPGSDSKEKEPEEEKTKKKKRKRGGKSKTEKKQDEQGLGEDDVVEDFVLSSDEEEEDLFDIGGDKDEDDAVDEIADPETKTSKKTKGTYKTWHKAYKKTKKKKARVAS.

Residues 3 to 69 (AKDDKKRVKK…EEELKRLQEK (67 aa)) adopt a coiled-coil conformation. Disordered regions lie at residues 23–67 (ELNN…KRLQ), 89–113 (ATEIEDDADVEPDTDLEDTEKEGDD), 627–646 (AVFGKNAPSSDDEDDEDRME), and 651–726 (AFNS…EDDA). Residues 30 to 41 (IDAHDIVMEQKS) show a composition bias toward basic and acidic residues. Basic residues predominate over residues 42 to 51 (DKKRGKKVKS). Residues 52-67 (KKAEAEEHEEELKRLQ) show a composition bias toward basic and acidic residues. A compositionally biased stretch (acidic residues) spans 90–113 (TEIEDDADVEPDTDLEDTEKEGDD). Residues 661–672 (DSKEKEPEEEKT) are compositionally biased toward basic and acidic residues. The Nuclear localization signal 1 motif lies at 673 to 680 (KKKKRKRG). The segment covering 673–682 (KKKKRKRGGK) has biased composition (basic residues). Positions 693-726 (GLGEDDVVEDFVLSSDEEEEDLFDIGGDKDEDDA) are enriched in acidic residues. The Nuclear localization signal 2 motif lies at 738 to 745 (SKKTKGTY).

This sequence belongs to the NOC2 family. As to quaternary structure, component of nucleolar complexes. Forms homodimers. Interacts with RBL and NOC3 in both the nucleolus and nucleoplasm. Binds to SWA2.

The protein localises to the nucleus. The protein resides in the nucleolus. It is found in the nucleoplasm. Its function is as follows. Together with SWA2, probably involved in pre-ribosome export from the nucleus to the cytoplasm. The protein is Nucleolar complex-associated protein 2 of Arabidopsis thaliana (Mouse-ear cress).